A 298-amino-acid chain; its full sequence is MDTSTVLEKYTQDLSNLPLEVRHLLEEIKSKDVQVSEARKRYQTRDHQLHKFIRTNGTLTKHPKEDQLYSKIEEDMKLVQKLQKEKILLANTALFLISKHLYHFETDIAKLERDELLPPLEHPIELTEVSKDEYAKSLNGFSDSASATPTPRNGSSATPVAETVKKIQKKKLSVKGASSSSAQSSSASRQVKRLRSEEIEDPLPYEGGSLAFNGNVAMSINSAADANGPNGEDADNNLYCFCQRVSFGEMIGCDNEDCKYEWFHWSCVGITSPPKDDEIWYCPDCASKMEKRKKKRKN.

Positions 20–86 form a coiled coil; sequence EVRHLLEEIK…KLVQKLQKEK (67 aa). A compositionally biased stretch (polar residues) spans 140-158; it reads GFSDSASATPTPRNGSSAT. The disordered stretch occupies residues 140–206; it reads GFSDSASATP…EEIEDPLPYE (67 aa). Positions 174-188 are enriched in low complexity; sequence VKGASSSSAQSSSAS. Residues 237–288 form a PHD-type zinc finger; the sequence is NLYCFCQRVSFGEMIGCDNEDCKYEWFHWSCVGITSPPKDDEIWYCPDCASK. Zn(2+) is bound by residues Cys-240, Cys-242, Cys-253, Cys-258, His-264, Cys-267, Cys-282, and Cys-285.

This sequence belongs to the ING family. In terms of assembly, interacts with H3K4me3 and to a lesser extent with H3K4me2. Component of the NuA4 histone acetyltransferase complex.

It is found in the nucleus. Its function is as follows. Component of the NuA4 histone acetyltransferase complex which is involved in transcriptional activation of selected genes principally by acetylation of nucleosomal histone H4 and H2A. The NuA4 complex is also involved in DNA repair. Involved in cell cycle progression and meiosis. This chain is Chromatin modification-related protein YNG2 (YNG2), found in Candida albicans (strain SC5314 / ATCC MYA-2876) (Yeast).